Consider the following 300-residue polypeptide: Cholesterol 25-hydroxylase-like protein (300 aa).

Asparagine 9 is a glycosylation site (N-linked (GlcNAc...) asparagine). 3 consecutive transmembrane segments (helical) span residues 54–73, 95–115, and 130–152; these read YTWVAVFTFIDVFLCNVPFF, LQGWNQLLWIYPMALVQLIWV, and MLSQLAIFFLAFDFTYFWFHYIN. Residues 135 to 266 enclose the Fatty acid hydroxylase domain; that stretch reads AIFFLAFDFT…WFNYLDRLMG (132 aa). The Histidine box-1 signature appears at 148 to 152; the sequence is FHYIN. The Histidine box-2 motif lies at 163 to 167; it reads HSVHH. Residues 192–212 traverse the membrane as a helical segment; that stretch reads ITTIPWIFPTHCLTYWIWFFI. A Histidine box-3 motif is present at residues 242 to 248; the sequence is AHDMHHL.

The protein belongs to the sterol desaturase family. It depends on Fe cation as a cofactor.

The protein localises to the membrane. Its function is as follows. Probable sterol desaturase. The sequence is that of Cholesterol 25-hydroxylase-like protein from Caenorhabditis elegans.